Here is a 395-residue protein sequence, read N- to C-terminus: Phosphoglycerate kinase (395 aa).

Residues 21–23 (DIN), R36, 59–62 (HFGR), R114, and R147 each bind substrate. ATP-binding positions include K197, E322, and 352 to 355 (GGDT).

It belongs to the phosphoglycerate kinase family. Monomer.

The protein resides in the cytoplasm. It catalyses the reaction (2R)-3-phosphoglycerate + ATP = (2R)-3-phospho-glyceroyl phosphate + ADP. The protein operates within carbohydrate degradation; glycolysis; pyruvate from D-glyceraldehyde 3-phosphate: step 2/5. This is Phosphoglycerate kinase from Roseobacter denitrificans (strain ATCC 33942 / OCh 114) (Erythrobacter sp. (strain OCh 114)).